A 233-amino-acid polypeptide reads, in one-letter code: EDDIEADHVGVYGTTVYQSPGDIGQYTHEFDGDEWFYVDLDKKETIWMLPEFGQLTSFDPQGGLQNIATGKYTLGILTKRSNSTPATNEAPQATVFPKSPVLLGQPNTLICFVDNIFPPVINITWLRNSKSVTDGVYETSFLVNRDHSFHKLSYLTFIPSDDDIYDCKVEHWGLEEPVLKHWEPEIPAPMSELTETVVCALGLSVGLVGIVVGTIFIIQGLRSGGTSRHPGPL.

Residues 1-88 form an alpha-1 region; that stretch reads EDDIEADHVG…KRSNSTPATN (88 aa). The Extracellular segment spans residues 1 to 195; sequence EDDIEADHVG…IPAPMSELTE (195 aa). The segment at 89 to 182 is alpha-2; the sequence is EAPQATVFPK…GLEEPVLKHW (94 aa). Positions 91–183 constitute an Ig-like C1-type domain; that stretch reads PQATVFPKSP…LEEPVLKHWE (93 aa). A disulfide bond links C111 and C167. N-linked (GlcNAc...) asparagine glycosylation occurs at N122. The connecting peptide stretch occupies residues 183–195; sequence EPEIPAPMSELTE. A helical transmembrane segment spans residues 196-221; it reads TVVCALGLSVGLVGIVVGTIFIIQGL. At 222 to 233 the chain is on the cytoplasmic side; the sequence is RSGGTSRHPGPL.

This sequence belongs to the MHC class II family.

It is found in the membrane. The sequence is that of H-2 class II histocompatibility antigen, A-S alpha chain (H2-Aa) from Mus musculus (Mouse).